Here is a 435-residue protein sequence, read N- to C-terminus: Solute carrier family 38 member 8 (435 aa).

11 consecutive transmembrane segments (helical) span residues 29 to 49 (AVFI…PWAF), 55 to 75 (VVPA…GLVI), 100 to 120 (IGKL…VAFL), 151 to 171 (FTLP…REIA), 178 to 198 (ILGT…YYLW), 218 to 240 (VFSV…SIYC), 250 to 270 (WALV…LTGV), 295 to 315 (IIVA…IVLF), 348 to 368 (MPLT…MPDL), 374 to 394 (IIGG…LICA), and 410 to 430 (VWGV…TAAA).

Belongs to the amino acid/polyamine transporter 2 family. As to expression, expressed in fetal and adult brain, and spinal cord. In the brain, it is localized in the cell body and axon of the majority of neuronal cells and in a subset of glial cells. Found throughout the neuronal retina, with higher expression levels in the inner and outer plexiform layers and the photoreceptor layer. Very weak expression is also present in the kidneys, thymus, and testes.

Its subcellular location is the membrane. The protein resides in the cytoplasm. It is found in the cell cortex. The protein localises to the cell projection. It localises to the axon. The catalysed reaction is L-glutamine(out) = L-glutamine(in). It catalyses the reaction L-alanine(in) = L-alanine(out). The enzyme catalyses L-histidine(out) = L-histidine(in). It carries out the reaction L-aspartate(out) = L-aspartate(in). The catalysed reaction is L-arginine(in) = L-arginine(out). It catalyses the reaction L-leucine(in) = L-leucine(out). Electrogenic sodium-dependent amino acid transporter with a preference for L-glutamine, L-alanine, L-histidine, L-aspartate and L-arginine. May facilitate glutamine uptake in both excitatory and inhibitory neurons. The transport mechanism and stoichiometry remain to be elucidated. The chain is Solute carrier family 38 member 8 from Homo sapiens (Human).